We begin with the raw amino-acid sequence, 166 residues long: Nucleotide-binding protein CV_2047 (166 aa).

This sequence belongs to the YajQ family.

In terms of biological role, nucleotide-binding protein. This is Nucleotide-binding protein CV_2047 from Chromobacterium violaceum (strain ATCC 12472 / DSM 30191 / JCM 1249 / CCUG 213 / NBRC 12614 / NCIMB 9131 / NCTC 9757 / MK).